The chain runs to 267 residues: Small ribosomal subunit protein uS3 (267 aa).

The region spanning 43 to 111 (IRKEMSKDLE…QVQLNIFEVK (69 aa)) is the KH type-2 domain. A disordered region spans residues 216 to 267 (FEEQQAQQNNRPGRRGGDRRPRRGNRSAAPQAAEAPKAEAPAEAAPAAETKE). A compositionally biased stretch (low complexity) spans 241–267 (RSAAPQAAEAPKAEAPAEAAPAAETKE).

Belongs to the universal ribosomal protein uS3 family. As to quaternary structure, part of the 30S ribosomal subunit. Forms a tight complex with proteins S10 and S14.

Its function is as follows. Binds the lower part of the 30S subunit head. Binds mRNA in the 70S ribosome, positioning it for translation. The chain is Small ribosomal subunit protein uS3 from Bifidobacterium longum (strain DJO10A).